The primary structure comprises 417 residues: MSLSNKLAITDVDLKDKRVLIRVDFNVPLDADKKITNNQRIVGALPTIKYAIENGAKAVVLMSHLGRPDGKANPKYSLKPVATELEKLLSKSVIFAENCVGKETEEIVNKATGGQVILLENLRFHAEEEGSSKDAEGKKVKADKEKVEEFRKGLTALGDVYINDAFGTAHRAHSSMVGVDLPQKASGFLVKKELEYFAKALESPQRPFLAILGGAKVSDKIQLIDNLLPKVNSLIITGAMAFTFKKTLENVKIGNSLFDEAGSKIVGDIVEKAKKNNVKIVLPVDYVTADKFAADAKTGYATDADGIPDGYMGLDVGEKSVELYKKTIAEAKTILWNGPPGVFELEPFANATKKTLDAAVAAAQSGSIVIIGGGDTATVAAKYGAEAKLSHVSTGGGASLELLEGKVLPGVDALSSK.

Val23, Asp24, Phe25, Asn26, Gln39, Arg40, Ser63, His64, Gly66, Arg67, Leu122, Arg123, His170, and Arg171 together coordinate (2R)-3-phosphoglycerate. Residue Ser203 is modified to Phosphoserine. Gly214 is a binding site for ADP. Gly214 contacts CDP. 2 residues coordinate AMP: Ala215 and Lys216. Ala215 is an ATP binding site. Ala215 contributes to the Mg(2+) binding site. Residue Asp219 coordinates CDP. Asp219 serves as a coordination point for Mg(2+). Lys220 is an AMP binding site. Lys220 contacts ATP. Gly238 is a binding site for ADP. Residue Gly238 coordinates CDP. AMP contacts are provided by Ala239 and Gly313. Residues Ala239 and Gly313 each contribute to the ATP site. CDP is bound by residues Gly338 and Phe343. Residue Phe343 participates in ADP binding. Glu344 contacts AMP. ATP contacts are provided by Glu344, Asp375, and Thr376. Asp375 provides a ligand contact to Mg(2+).

This sequence belongs to the phosphoglycerate kinase family. Monomer. Requires Mg(2+) as cofactor. Dephosphorylated by PTC1 and PTC2 at Ser-203; the protein is cytosolic when dephosphorylated.

The protein localises to the cytoplasm. The protein resides in the cytosol. Its subcellular location is the mitochondrion. The enzyme catalyses (2R)-3-phosphoglycerate + ATP = (2R)-3-phospho-glyceroyl phosphate + ADP. Its pathway is carbohydrate degradation; glycolysis; pyruvate from D-glyceraldehyde 3-phosphate: step 2/5. Catalyzes one of the two ATP producing reactions in the glycolytic pathway via the reversible conversion of 1,3-diphosphoglycerate to 3-phosphoglycerate. Both L- and D- forms of purine and pyrimidine nucleotides can be used as substrates, but the activity is much lower on pyrimidines. Negatively regulates the biosynthesis of acetyl-CoA from pyruvate in the mitochondrion and consequently also attenuates aflatoxin production. The protein is Phosphoglycerate kinase of Aspergillus flavus (strain ATCC 200026 / FGSC A1120 / IAM 13836 / NRRL 3357 / JCM 12722 / SRRC 167).